A 404-amino-acid polypeptide reads, in one-letter code: Probable tRNA sulfurtransferase (404 aa).

In terms of domain architecture, THUMP spans 61–166 (EAVSERLKDV…SGYSYIMCDE (106 aa)). ATP is bound by residues 184-185 (LL), 209-210 (HF), R266, G288, and Q297.

Belongs to the ThiI family.

Its subcellular location is the cytoplasm. It carries out the reaction [ThiI sulfur-carrier protein]-S-sulfanyl-L-cysteine + a uridine in tRNA + 2 reduced [2Fe-2S]-[ferredoxin] + ATP + H(+) = [ThiI sulfur-carrier protein]-L-cysteine + a 4-thiouridine in tRNA + 2 oxidized [2Fe-2S]-[ferredoxin] + AMP + diphosphate. It catalyses the reaction [ThiS sulfur-carrier protein]-C-terminal Gly-Gly-AMP + S-sulfanyl-L-cysteinyl-[cysteine desulfurase] + AH2 = [ThiS sulfur-carrier protein]-C-terminal-Gly-aminoethanethioate + L-cysteinyl-[cysteine desulfurase] + A + AMP + 2 H(+). It functions in the pathway cofactor biosynthesis; thiamine diphosphate biosynthesis. In terms of biological role, catalyzes the ATP-dependent transfer of a sulfur to tRNA to produce 4-thiouridine in position 8 of tRNAs, which functions as a near-UV photosensor. Also catalyzes the transfer of sulfur to the sulfur carrier protein ThiS, forming ThiS-thiocarboxylate. This is a step in the synthesis of thiazole, in the thiamine biosynthesis pathway. The sulfur is donated as persulfide by IscS. The sequence is that of Probable tRNA sulfurtransferase from Bacillus cereus (strain ZK / E33L).